Consider the following 420-residue polypeptide: Glucose-1-phosphate adenylyltransferase (420 aa).

Residues tyrosine 107, glycine 172, 187–188, and serine 205 contribute to the alpha-D-glucose 1-phosphate site; that span reads EK.

Belongs to the bacterial/plant glucose-1-phosphate adenylyltransferase family. Homotetramer.

It catalyses the reaction alpha-D-glucose 1-phosphate + ATP + H(+) = ADP-alpha-D-glucose + diphosphate. It functions in the pathway glycan biosynthesis; glycogen biosynthesis. Functionally, involved in the biosynthesis of ADP-glucose, a building block required for the elongation reactions to produce glycogen. Catalyzes the reaction between ATP and alpha-D-glucose 1-phosphate (G1P) to produce pyrophosphate and ADP-Glc. The protein is Glucose-1-phosphate adenylyltransferase of Sinorhizobium fredii (strain NBRC 101917 / NGR234).